Here is a 419-residue protein sequence, read N- to C-terminus: UDP-N-acetylglucosamine 1-carboxyvinyltransferase (419 aa).

22–23 is a binding site for phosphoenolpyruvate; it reads KN. A UDP-N-acetyl-alpha-D-glucosamine-binding site is contributed by Arg95. The Proton donor role is filled by Cys119. Cys119 carries the 2-(S-cysteinyl)pyruvic acid O-phosphothioketal modification. Residues 164–167, Asp308, and Ile330 each bind UDP-N-acetyl-alpha-D-glucosamine; that span reads KVSV.

The protein belongs to the EPSP synthase family. MurA subfamily.

Its subcellular location is the cytoplasm. The catalysed reaction is phosphoenolpyruvate + UDP-N-acetyl-alpha-D-glucosamine = UDP-N-acetyl-3-O-(1-carboxyvinyl)-alpha-D-glucosamine + phosphate. It participates in cell wall biogenesis; peptidoglycan biosynthesis. Cell wall formation. Adds enolpyruvyl to UDP-N-acetylglucosamine. This Rickettsia canadensis (strain McKiel) protein is UDP-N-acetylglucosamine 1-carboxyvinyltransferase.